Consider the following 377-residue polypeptide: Homoserine O-acetyltransferase (377 aa).

The region spanning 48 to 347 (NVVLIEHALT…PVGHDAFLTE (300 aa)) is the AB hydrolase-1 domain. Ser143 functions as the Nucleophile in the catalytic mechanism. Arg213 provides a ligand contact to substrate. Active-site residues include Asp311 and His341. Asp342 contributes to the substrate binding site.

This sequence belongs to the AB hydrolase superfamily. MetX family. In terms of assembly, homodimer.

The protein resides in the cytoplasm. The enzyme catalyses L-homoserine + acetyl-CoA = O-acetyl-L-homoserine + CoA. The protein operates within amino-acid biosynthesis; L-methionine biosynthesis via de novo pathway; O-acetyl-L-homoserine from L-homoserine: step 1/1. Functionally, transfers an acetyl group from acetyl-CoA to L-homoserine, forming acetyl-L-homoserine. This chain is Homoserine O-acetyltransferase, found in Corynebacterium glutamicum (strain ATCC 13032 / DSM 20300 / JCM 1318 / BCRC 11384 / CCUG 27702 / LMG 3730 / NBRC 12168 / NCIMB 10025 / NRRL B-2784 / 534).